The chain runs to 184 residues: UPF0301 protein RHOS4_26140 (184 aa).

The protein belongs to the UPF0301 (AlgH) family.

This is UPF0301 protein RHOS4_26140 from Cereibacter sphaeroides (strain ATCC 17023 / DSM 158 / JCM 6121 / CCUG 31486 / LMG 2827 / NBRC 12203 / NCIMB 8253 / ATH 2.4.1.) (Rhodobacter sphaeroides).